Reading from the N-terminus, the 74-residue chain is MSTIWVVLIAIAALVAGVALGFFIARKYMMSYLKKNPPINEQMLRTLMMQMGQKPSQKKINQMMRAMNNQSGKE.

A helical transmembrane segment spans residues 4-24 (IWVVLIAIAALVAGVALGFFI).

It belongs to the UPF0154 family.

The protein resides in the membrane. The polypeptide is UPF0154 protein OB1676 (Oceanobacillus iheyensis (strain DSM 14371 / CIP 107618 / JCM 11309 / KCTC 3954 / HTE831)).